The sequence spans 218 residues: Large ribosomal subunit protein uL1 (218 aa).

Belongs to the universal ribosomal protein uL1 family. As to quaternary structure, part of the 50S ribosomal subunit.

Functionally, binds directly to 23S rRNA. Probably involved in E site tRNA release. Its function is as follows. Protein L1 is also a translational repressor protein, it controls the translation of its operon by binding to its mRNA. The sequence is that of Large ribosomal subunit protein uL1 from Metallosphaera sedula (strain ATCC 51363 / DSM 5348 / JCM 9185 / NBRC 15509 / TH2).